The following is a 116-amino-acid chain: NADH-ubiquinone oxidoreductase chain 3 (116 aa).

Helical transmembrane passes span 3–23 (LITTIIAITITLSAVLATVSF), 56–76 (FFLIAILFLLFDLEIALLLPL), and 85–105 (PALTLAWSAAVLALLTLGLIY).

It belongs to the complex I subunit 3 family.

Its subcellular location is the mitochondrion membrane. It catalyses the reaction a ubiquinone + NADH + 5 H(+)(in) = a ubiquinol + NAD(+) + 4 H(+)(out). Core subunit of the mitochondrial membrane respiratory chain NADH dehydrogenase (Complex I) that is believed to belong to the minimal assembly required for catalysis. Complex I functions in the transfer of electrons from NADH to the respiratory chain. The immediate electron acceptor for the enzyme is believed to be ubiquinone. This chain is NADH-ubiquinone oxidoreductase chain 3 (MT-ND3), found in Salmo trutta (Brown trout).